A 254-amino-acid polypeptide reads, in one-letter code: Imidazole glycerol phosphate synthase subunit HisF (254 aa).

Active-site residues include Asp-11 and Asp-130.

This sequence belongs to the HisA/HisF family. Heterodimer of HisH and HisF.

The protein resides in the cytoplasm. It catalyses the reaction 5-[(5-phospho-1-deoxy-D-ribulos-1-ylimino)methylamino]-1-(5-phospho-beta-D-ribosyl)imidazole-4-carboxamide + L-glutamine = D-erythro-1-(imidazol-4-yl)glycerol 3-phosphate + 5-amino-1-(5-phospho-beta-D-ribosyl)imidazole-4-carboxamide + L-glutamate + H(+). The protein operates within amino-acid biosynthesis; L-histidine biosynthesis; L-histidine from 5-phospho-alpha-D-ribose 1-diphosphate: step 5/9. IGPS catalyzes the conversion of PRFAR and glutamine to IGP, AICAR and glutamate. The HisF subunit catalyzes the cyclization activity that produces IGP and AICAR from PRFAR using the ammonia provided by the HisH subunit. The protein is Imidazole glycerol phosphate synthase subunit HisF of Acidiphilium cryptum (strain JF-5).